Reading from the N-terminus, the 63-residue chain is uncharacterized protein (63 aa).

This is an uncharacterized protein from Thermoproteus tenax virus 1 (strain KRA1) (TTV1).